We begin with the raw amino-acid sequence, 129 residues long: Small ribosomal subunit protein uS12 (129 aa).

Position 89 is a 3-methylthioaspartic acid (aspartate 89). The tract at residues 110 to 129 (RKQGRSRYGAPRKQVVATKK) is disordered.

This sequence belongs to the universal ribosomal protein uS12 family. In terms of assembly, part of the 30S ribosomal subunit. Contacts proteins S8 and S17. May interact with IF1 in the 30S initiation complex.

Its function is as follows. With S4 and S5 plays an important role in translational accuracy. Functionally, interacts with and stabilizes bases of the 16S rRNA that are involved in tRNA selection in the A site and with the mRNA backbone. Located at the interface of the 30S and 50S subunits, it traverses the body of the 30S subunit contacting proteins on the other side and probably holding the rRNA structure together. The combined cluster of proteins S8, S12 and S17 appears to hold together the shoulder and platform of the 30S subunit. The polypeptide is Small ribosomal subunit protein uS12 (Rickettsia bellii (strain OSU 85-389)).